The chain runs to 180 residues: Large ribosomal subunit protein uL6 (180 aa).

It belongs to the universal ribosomal protein uL6 family. As to quaternary structure, part of the 50S ribosomal subunit.

In terms of biological role, this protein binds to the 23S rRNA, and is important in its secondary structure. It is located near the subunit interface in the base of the L7/L12 stalk, and near the tRNA binding site of the peptidyltransferase center. This Salinispora arenicola (strain CNS-205) protein is Large ribosomal subunit protein uL6.